Consider the following 484-residue polypeptide: Bifunctional protein GlmU (484 aa).

Residues 1-240 form a pyrophosphorylase region; the sequence is MSNPHSSAVI…HRELAGVNDR (240 aa). UDP-N-acetyl-alpha-D-glucosamine contacts are provided by residues 12–15, lysine 26, glutamine 83, and 88–89; these read LAAG and GT. A Mg(2+)-binding site is contributed by aspartate 113. 4 residues coordinate UDP-N-acetyl-alpha-D-glucosamine: glycine 150, glutamate 165, asparagine 180, and asparagine 238. Asparagine 238 contacts Mg(2+). A linker region spans residues 241–261; it reads VQLAQAGKILNQRLVEDAMRN. Residues 262-484 are N-acetyltransferase; that stretch reads GATIVDPDTT…QAHAHETKEG (223 aa). UDP-N-acetyl-alpha-D-glucosamine is bound by residues arginine 343 and lysine 361. Residue histidine 373 is the Proton acceptor of the active site. The UDP-N-acetyl-alpha-D-glucosamine site is built by tyrosine 376 and asparagine 387. Residues alanine 390, 396 to 397, serine 415, and alanine 433 each bind acetyl-CoA; that span reads NY. A disordered region spans residues 461–484; the sequence is EKNRPGTPAADAARQAHAHETKEG.

This sequence in the N-terminal section; belongs to the N-acetylglucosamine-1-phosphate uridyltransferase family. In the C-terminal section; belongs to the transferase hexapeptide repeat family. In terms of assembly, homotrimer. Mg(2+) is required as a cofactor.

It is found in the cytoplasm. It carries out the reaction alpha-D-glucosamine 1-phosphate + acetyl-CoA = N-acetyl-alpha-D-glucosamine 1-phosphate + CoA + H(+). The enzyme catalyses N-acetyl-alpha-D-glucosamine 1-phosphate + UTP + H(+) = UDP-N-acetyl-alpha-D-glucosamine + diphosphate. It participates in nucleotide-sugar biosynthesis; UDP-N-acetyl-alpha-D-glucosamine biosynthesis; N-acetyl-alpha-D-glucosamine 1-phosphate from alpha-D-glucosamine 6-phosphate (route II): step 2/2. The protein operates within nucleotide-sugar biosynthesis; UDP-N-acetyl-alpha-D-glucosamine biosynthesis; UDP-N-acetyl-alpha-D-glucosamine from N-acetyl-alpha-D-glucosamine 1-phosphate: step 1/1. It functions in the pathway bacterial outer membrane biogenesis; LPS lipid A biosynthesis. Catalyzes the last two sequential reactions in the de novo biosynthetic pathway for UDP-N-acetylglucosamine (UDP-GlcNAc). The C-terminal domain catalyzes the transfer of acetyl group from acetyl coenzyme A to glucosamine-1-phosphate (GlcN-1-P) to produce N-acetylglucosamine-1-phosphate (GlcNAc-1-P), which is converted into UDP-GlcNAc by the transfer of uridine 5-monophosphate (from uridine 5-triphosphate), a reaction catalyzed by the N-terminal domain. This Corynebacterium diphtheriae (strain ATCC 700971 / NCTC 13129 / Biotype gravis) protein is Bifunctional protein GlmU.